The sequence spans 423 residues: T-box protein 2 (423 aa).

Residues L70–D243 constitute a DNA-binding region (T-box). Disordered stretches follow at residues A238–S324 and V384–P423. The span at D261 to S283 shows a compositional bias: polar residues. Residues T302 to S317 show a composition bias toward low complexity. Over residues A394 to K404 the composition is skewed to basic and acidic residues.

Post-translationally, sumoylated. Expressed in body wall muscles and a subset of pharyngeal neurons. Expressed in head neurons and occassionally tail neurons. Not expressed in the pharynx.

Its subcellular location is the nucleus. In terms of biological role, involved in the transcriptional regulation of genes required for the development of pharyngeal muscles derived from the ABa lineage. Acts as a transcriptional repressor and binds to T-box binding sites in its own promoter to negatively autoregulate its own expression in neurons, seam cells and the gut in order to restrict its expression to certain tissues. May function together with the nfya-1-NF-Y complex to repress its own expression. Plays a role in neural fate specification in the hermaphrodite-specific neuron (HSN)/PHB neuron lineage, acting in concert with homeobox protein egl-5 and the asymmetric cell division protein ham-1. The protein is T-box protein 2 of Caenorhabditis elegans.